A 343-amino-acid polypeptide reads, in one-letter code: Transmembrane protein 120A (343 aa).

Residues 1-135 (MQSPPPDPLG…KFAYKDEYEK (135 aa)) are Cytoplasmic-facing. Lysine 130 provides a ligand contact to CoA. Residues 136 to 156 (FKLYLTIILIVISFTCRFLLN) form a helical membrane-spanning segment. Residues 157–162 (SRVTDA) lie on the Extracellular side of the membrane. A helical membrane pass occupies residues 163–183 (AFNFLLVWYYCTLTIRESILI). Over 184–190 (NNGSRIK) the chain is Cytoplasmic. 2 residues coordinate CoA: serine 187 and arginine 188. A helical transmembrane segment spans residues 191 to 211 (GWWVFHHYVSTFLSGVMLTWP). The Extracellular portion of the chain corresponds to 212–222 (DGLMYQKFRNQ). A helical membrane pass occupies residues 223–240 (FLSFSMYQSFVQFLQYYY). CoA is bound by residues glutamine 237, tyrosine 240, glutamine 241, and histidine 283. The Cytoplasmic segment spans residues 241–273 (QSGCLYRLRALGERHTMDLTVEGFQSWMWRGLT). The helical transmembrane segment at 274–294 (FLLPFLFFGHFWQLFNALTLF) threads the bilayer. Residues 295–305 (NLARDPECKEW) lie on the Extracellular side of the membrane. A helical membrane pass occupies residues 306–326 (QVLMCGFPFLLLFLGNFFTTL). Over 327–343 (RVVHQKFHSQQHGNKKD) the chain is Cytoplasmic. Lysine 332 contacts CoA.

This sequence belongs to the TMEM120 family. Homodimer. Forms heterooligomer with TMEM120B. Interacts with PKD2; TMEM120A inhibits PKD2 channel activity through the physical association of PKD2 with TMEM120A. As to expression, widely expressed, with higher expression in the heart, kidneys, colon and sensory neurons of the dorsal root ganglia. Expressed in nociceptors. Highly expressed in white adipose tissue (at protein level). Highly expressed in brown adipose tissue and expressed at low levels in liver.

It localises to the cell membrane. It is found in the nucleus envelope. The protein resides in the nucleus inner membrane. Its subcellular location is the endoplasmic reticulum. Its function is as follows. Multifunctional protein involved in mechanosensation, and plays an essential role in lipid metabolism and adipocyte differentiation. May function as a potential ion channel involved in sensing mechanical stimuli. Mediates the mechanosensitivity of the PKD2-TMEM120A channel complex through direct physical interaction. TMEM120A seems to affect mechanosensation by inhibiting PIEZO2 channels, possibly by altering cellular lipid content. TMEM120A is structurally similar to a lipid-modifying enzyme, ELOVL7, and contains a bound coenzyme A molecule, which suggests it might function as an enzyme in lipid metabolism. This is Transmembrane protein 120A from Mus musculus (Mouse).